Consider the following 2049-residue polypeptide: Polyglutamine-repeat protein pqn-41 (2049 aa).

The disordered stretch occupies residues 1 to 58 (MKPKKLQQGSDSAHTSDTESTKTCEKTAKKLPKTQKKLQKSKKTAKKRRDEEFRIFFP). Residues 1-1601 (MKPKKLQQGS…TTSQHQQSIQ (1601 aa)) form a sufficient to prevent linker cell death region. Basic and acidic residues predominate over residues 14 to 28 (HTSDTESTKTCEKTA). A compositionally biased stretch (basic residues) spans 29-47 (KKLPKTQKKLQKSKKTAKK). 2 coiled-coil regions span residues 264 to 302 (RRQE…ANSD) and 396 to 432 (TNAG…DRNH). The interval 459 to 492 (RGRNSTENSDSESSSEASEPPDDVITKEEPTDFS) is disordered. Residues 463–476 (STENSDSESSSEAS) show a composition bias toward low complexity. 3 coiled-coil regions span residues 686–730 (ESFE…SFET), 756–796 (ISAD…REFS), and 822–880 (QSSI…ARKL). The segment covering 1134-1150 (QQQHNHQNFQQQQQGNH) has biased composition (low complexity). 4 disordered regions span residues 1134–1198 (QQQH…ENAA), 1236–1265 (AAAA…QQQN), 1481–1616 (YKQS…GAAY), and 1636–1661 (ATPK…TSQA). Over residues 1162–1171 (QKRKYTKRKA) the composition is skewed to basic residues. The segment covering 1176–1194 (AVASSSDQNGMKSPGSSAM) has biased composition (polar residues). A compositionally biased stretch (low complexity) spans 1495–1533 (STSSSSAAPASAPAPRAGAGAGATSSSAASSSTSTPSSS). Positions 1534-1546 (SHHKKSSPPHHQK) are enriched in basic residues. 2 stretches are compositionally biased toward low complexity: residues 1569-1604 (SAPI…QFSQ) and 1649-1661 (ATQQ…TSQA). Coiled coils occupy residues 1659 to 1685 (SQAS…AAAA) and 1725 to 1801 (QQYL…LQNI). A disordered region spans residues 1836–1858 (AQAQQAPPTSQPSQAATPQQQQQ). 2 coiled-coil regions span residues 1863–1961 (RQME…AAAA) and 1991–2041 (SAQQ…AQQK).

As to expression, expressed in the linker cell just before it dies.

The protein resides in the cytoplasm. Its function is as follows. In males, required for non-apoptotic death of the linker cell once it has finished guiding gonad elongation at the end of larval development. May be involved in nuclear envelope crenellation in the linker cell. In terms of biological role, in males, promotes linker cell survival. In Caenorhabditis elegans, this protein is Polyglutamine-repeat protein pqn-41.